Consider the following 343-residue polypeptide: MKVMHIHFGTEGGAERFFVNLVNALHERGVEQRALIRPGRSWRKDLENGATIYEGVFRRISLSRFLLKWRMNRVLREFEPDVIMAWQLRASRFMPAHAKAFRISRLGDYPEHLGYYTNVQTLVCITPDMAAKVRELGWKRDIEVIANFTRARPAPPVARADLQTPADAFVVVGMGRFVKRKGFAGLIRAVKEVENTYLWLVGDGPEREQLEQLTDELGLRDRVRFTGWQTNAYGFLSAGDAFVINSSHEPLGNVCFEGWGAGKPTIASRAEGPSWVMTHESDALMVDCGDDVGLAAAIRRLRDDPALRERLSAGGSETLRTRFSEKAITDAYLDLFDRGVAKR.

It belongs to the glycosyltransferase group 1 family. Glycosyltransferase 4 subfamily.

It functions in the pathway bacterial outer membrane biogenesis; LPS core biosynthesis. In Rhizobium meliloti (strain 1021) (Ensifer meliloti), this protein is Lipopolysaccharide core biosynthesis glycosyltransferase LpsD (lpsD).